We begin with the raw amino-acid sequence, 297 residues long: MSERAHIPVLVEECLALFAQRPPQTFRDVTLGAGGHAYAFLEAYPSLTCYDGSDRDLQALAIAEKRLETFQDRVSFSHASFEDLANQPTPRLYDGVLADLGVSSMQLDTLSRGFSFQGEKEELDMRMDQTQELSASDVLNSLKEEELGRIFREYGEEPQWKSAAKAVVHFRKHKKILSIQDVKEALLGVFPHYRFHRKIHPLTLIFQALRVYVNGEDRQLKSLLTSAISWLAPQGRLVIISFCSSEDRPVKWFFKEAEASGLGKVITKKVIQPTYQEVRRNPRSRSAKLRCFEKASQ.

S-adenosyl-L-methionine-binding positions include 34–36, Asp54, Phe81, Asp99, and Gln106; that span reads GGH.

The protein belongs to the methyltransferase superfamily. RsmH family.

The protein resides in the cytoplasm. The enzyme catalyses cytidine(1402) in 16S rRNA + S-adenosyl-L-methionine = N(4)-methylcytidine(1402) in 16S rRNA + S-adenosyl-L-homocysteine + H(+). Specifically methylates the N4 position of cytidine in position 1402 (C1402) of 16S rRNA. In Chlamydia pneumoniae (Chlamydophila pneumoniae), this protein is Ribosomal RNA small subunit methyltransferase H.